The chain runs to 2336 residues: RNA1 polyprotein (2336 aa).

Over Gln599–Leu1210 the chain is Cytoplasmic. An SF3 helicase domain is found at Met797–Cys964. An ATP-binding site is contributed by Gly827–Ser834. A helical transmembrane segment spans residues Leu1211–Ile1231. Over Gly1232–Lys1253 the chain is Lumenal. The Peptidase C3 domain maps to Tyr1278–Met1486. Active-site for picornain 3C-like protease activity residues include His1320, Glu1358, and Cys1450. The region spanning Asp1771–Phe1899 is the RdRp catalytic domain.

Belongs to the nepoviruses RNA1 polyprotein family. Post-translationally, specific enzymatic cleavages by picornain 3C-like protease in vivo yield mature proteins. Picornain 3C-like protease is autocatalytically processed. In terms of processing, VPg is uridylylated by the polymerase and is covalently linked to the 5'-end of genomic RNA. This uridylylated form acts as a nucleotide-peptide primer for the polymerase.

The protein resides in the host endoplasmic reticulum lumen. Its subcellular location is the host endoplasmic reticulum membrane. The enzyme catalyses RNA(n) + a ribonucleoside 5'-triphosphate = RNA(n+1) + diphosphate. Functionally, picornain 3C-like protease is a thiol protease that cleaves the P1 and P2 polyproteins. The chain is RNA1 polyprotein from Cycas necrotic stunt virus (CNSV).